Consider the following 203-residue polypeptide: Proteasome subunit beta 1 (203 aa).

The propeptide at 1–7 is removed in mature form; by autocatalysis; the sequence is MTEKLKG. The Nucleophile role is filled by threonine 8.

It belongs to the peptidase T1B family. In terms of assembly, the 20S proteasome core is composed of 14 alpha and 14 beta subunits that assemble into four stacked heptameric rings, resulting in a barrel-shaped structure. The two inner rings, each composed of seven catalytic beta subunits, are sandwiched by two outer rings, each composed of seven alpha subunits. The catalytic chamber with the active sites is on the inside of the barrel. Has a gated structure, the ends of the cylinder being occluded by the N-termini of the alpha-subunits. Is capped at one or both ends by the proteasome regulatory ATPase, PAN.

It is found in the cytoplasm. It carries out the reaction Cleavage of peptide bonds with very broad specificity.. With respect to regulation, the formation of the proteasomal ATPase PAN-20S proteasome complex, via the docking of the C-termini of PAN into the intersubunit pockets in the alpha-rings, triggers opening of the gate for substrate entry. Interconversion between the open-gate and close-gate conformations leads to a dynamic regulation of the 20S proteasome proteolysis activity. Its function is as follows. Component of the proteasome core, a large protease complex with broad specificity involved in protein degradation. The chain is Proteasome subunit beta 1 from Thermococcus kodakarensis (strain ATCC BAA-918 / JCM 12380 / KOD1) (Pyrococcus kodakaraensis (strain KOD1)).